Reading from the N-terminus, the 194-residue chain is Imidazole glycerol phosphate synthase subunit HisH (194 aa).

The 194-residue stretch at 1-194 (MIIIDTGCAN…QLLKNFVENL (194 aa)) folds into the Glutamine amidotransferase type-1 domain. Residue Cys-75 is the Nucleophile of the active site. Active-site residues include His-175 and Glu-177.

In terms of assembly, heterodimer of HisH and HisF.

The protein localises to the cytoplasm. It carries out the reaction 5-[(5-phospho-1-deoxy-D-ribulos-1-ylimino)methylamino]-1-(5-phospho-beta-D-ribosyl)imidazole-4-carboxamide + L-glutamine = D-erythro-1-(imidazol-4-yl)glycerol 3-phosphate + 5-amino-1-(5-phospho-beta-D-ribosyl)imidazole-4-carboxamide + L-glutamate + H(+). The enzyme catalyses L-glutamine + H2O = L-glutamate + NH4(+). The protein operates within amino-acid biosynthesis; L-histidine biosynthesis; L-histidine from 5-phospho-alpha-D-ribose 1-diphosphate: step 5/9. IGPS catalyzes the conversion of PRFAR and glutamine to IGP, AICAR and glutamate. The HisH subunit catalyzes the hydrolysis of glutamine to glutamate and ammonia as part of the synthesis of IGP and AICAR. The resulting ammonia molecule is channeled to the active site of HisF. In Mannheimia succiniciproducens (strain KCTC 0769BP / MBEL55E), this protein is Imidazole glycerol phosphate synthase subunit HisH.